The primary structure comprises 197 residues: Probable thymidylate kinase (197 aa).

7 to 14 (GLDGSGKT) contacts ATP.

It belongs to the thymidylate kinase family.

It catalyses the reaction dTMP + ATP = dTDP + ADP. This Halorubrum lacusprofundi (strain ATCC 49239 / DSM 5036 / JCM 8891 / ACAM 34) protein is Probable thymidylate kinase.